The chain runs to 239 residues: tRNA (guanine-N(7)-)-methyltransferase (239 aa).

Positions 69, 94, 121, and 144 each coordinate S-adenosyl-L-methionine. Asp144 is a catalytic residue. Residue Lys148 participates in substrate binding. The tract at residues 150 to 155 is interaction with RNA; sequence RHNKRR. Substrate is bound by residues Asp180 and 217–220; that span reads TKFE.

It belongs to the class I-like SAM-binding methyltransferase superfamily. TrmB family. As to quaternary structure, monomer.

The catalysed reaction is guanosine(46) in tRNA + S-adenosyl-L-methionine = N(7)-methylguanosine(46) in tRNA + S-adenosyl-L-homocysteine. It functions in the pathway tRNA modification; N(7)-methylguanine-tRNA biosynthesis. Functionally, catalyzes the formation of N(7)-methylguanine at position 46 (m7G46) in tRNA. This is tRNA (guanine-N(7)-)-methyltransferase from Cronobacter sakazakii (strain ATCC BAA-894) (Enterobacter sakazakii).